The sequence spans 252 residues: uncharacterized protein (252 aa).

Residues 96–238 (FRRFTPRARN…ITTLASLTGA (143 aa)) form the Clp R domain. Repeat regions lie at residues 99–164 (FTPR…PAVT) and 172–238 (FSGP…LTGA).

This sequence belongs to the ClpA/ClpB family. ClpC subfamily.

This is an uncharacterized protein from Mycobacterium bovis (strain ATCC BAA-935 / AF2122/97).